The primary structure comprises 134 residues: Ribonuclease P protein component (134 aa).

Belongs to the RnpA family. As to quaternary structure, consists of a catalytic RNA component (M1 or rnpB) and a protein subunit.

It carries out the reaction Endonucleolytic cleavage of RNA, removing 5'-extranucleotides from tRNA precursor.. RNaseP catalyzes the removal of the 5'-leader sequence from pre-tRNA to produce the mature 5'-terminus. It can also cleave other RNA substrates such as 4.5S RNA. The protein component plays an auxiliary but essential role in vivo by binding to the 5'-leader sequence and broadening the substrate specificity of the ribozyme. The sequence is that of Ribonuclease P protein component from Pseudomonas putida (strain GB-1).